The following is a 322-amino-acid chain: Homeobox protein DBX1-B (322 aa).

A DNA-binding region (homeobox) is located at residues 179 to 238 (GMLRRAVFSDVQRKALEKMFQKQKYISKPDRKKLATKLGLKDSQVKIWFQNRRMKWRNSK). Disordered regions lie at residues 238 to 266 (KERE…LSDV) and 296 to 322 (DLHF…ITVS). Positions 312–322 (SESEDEEITVS) are enriched in acidic residues.

The protein belongs to the H2.0 homeobox family.

Its subcellular location is the nucleus. The protein is Homeobox protein DBX1-B (dbx1b) of Danio rerio (Zebrafish).